Reading from the N-terminus, the 209-residue chain is MASMGLQVMGIALAVLGWLAVMLCCALPMWRVTAFIGSNIVTSQTIWEGLWMNCVVQSTGQMQCKVYDSLLALPQDLQAARALVIISIIVAALGVLLSVVGGKCTNCLEDESAKAKTMIVAGVVFLLAGLMVIVPVSWTAHNIIQDFYNPLVASGQKREMGASLYVGWAASGLLLLGGGLLCCNCPPRTDKPYSAKYSAARSAAASNYV.

Residues 1 to 7 are Cytoplasmic-facing; that stretch reads MASMGLQ. The tract at residues 1–103 is interaction with EPHA2; it reads MASMGLQVMG…GVLLSVVGGK (103 aa). The chain crosses the membrane as a helical span at residues 8-28; the sequence is VMGIALAVLGWLAVMLCCALP. Residues 29 to 81 are Extracellular-facing; the sequence is MWRVTAFIGSNIVTSQTIWEGLWMNCVVQSTGQMQCKVYDSLLALPQDLQAAR. A disulfide bridge links cysteine 54 with cysteine 64. The chain crosses the membrane as a helical span at residues 82–102; the sequence is ALVIISIIVAALGVLLSVVGG. At 103–117 the chain is on the cytoplasmic side; it reads KCTNCLEDESAKAKT. The helical transmembrane segment at 118-138 threads the bilayer; the sequence is MIVAGVVFLLAGLMVIVPVSW. Over 139–160 the chain is Extracellular; it reads TAHNIIQDFYNPLVASGQKREM. Residues 161-181 traverse the membrane as a helical segment; it reads GASLYVGWAASGLLLLGGGLL. Topologically, residues 182 to 209 are cytoplasmic; the sequence is CCNCPPRTDKPYSAKYSAARSAAASNYV. Phosphotyrosine; by EPHA2 is present on tyrosine 208. Residues 208–209 are interactions with TJP1, TJP2 and TJP3; the sequence is YV.

Belongs to the claudin family. As to quaternary structure, can form heteropolymeric strands with other claudins. Interacts with CLDN8. Interacts with CLDN1. Directly interacts with TJP1/ZO-1. Interacts with TJP2/ZO-2 and TJP3/ZO-3. Interacts with EPHA2; phosphorylates CLDN4 and may regulate tight junctions. In terms of assembly, (Microbial infection) Interacts (via both extracellular domains) with Clostridium perfringens enterotoxin CPE; the interaction may disrupt claudin assembly in tight junctions. Post-translationally, phosphorylated. Phosphorylation by EPHA2 is stimulated by EFNA1 and alters interaction with TJP1.

It localises to the cell junction. It is found in the tight junction. The protein localises to the cell membrane. It carries out the reaction chloride(in) = chloride(out). The enzyme catalyses bromide(in) = bromide(out). The catalysed reaction is iodide(out) = iodide(in). It catalyses the reaction fluoride(in) = fluoride(out). Can associate with other claudins to regulate tight junction structural and functional strand dynamics. May coassemble with CLDN8 into tight junction strands containing anion-selective channels that convey paracellular chloride permeability in renal collecting ducts. May integrate into CLDN3 strands to modulate localized tight junction barrier properties. May disrupt strand assembly of channel-forming CLDN2 and CLDN15 and inhibit cation conductance. Cannot form tight junction strands on its own. The polypeptide is Claudin-4 (Homo sapiens (Human)).